Reading from the N-terminus, the 188-residue chain is Protein YecM (188 aa).

This sequence to H.influenzae HI_1582/HI_1581.

The polypeptide is Protein YecM (yecM) (Escherichia coli (strain K12)).